The primary structure comprises 229 residues: DNA repair protein RecO (229 aa).

This sequence belongs to the RecO family.

Involved in DNA repair and RecF pathway recombination. This chain is DNA repair protein RecO, found in Pseudomonas fluorescens (strain ATCC BAA-477 / NRRL B-23932 / Pf-5).